The chain runs to 169 residues: Probable phospholipid hydroperoxide glutathione peroxidase (169 aa).

The active site involves Cys43.

This sequence belongs to the glutathione peroxidase family.

The protein localises to the cytoplasm. The enzyme catalyses a hydroperoxy polyunsaturated fatty acid + 2 glutathione = a hydroxy polyunsaturated fatty acid + glutathione disulfide + H2O. Functionally, protects cells and enzymes from oxidative damage, by catalyzing the reduction of hydrogen peroxide, lipid peroxides and organic hydroperoxide, by glutathione. The protein is Probable phospholipid hydroperoxide glutathione peroxidase of Nicotiana tabacum (Common tobacco).